The chain runs to 233 residues: 7-cyano-7-deazaguanine synthase (233 aa).

ATP is bound at residue 7–17 (LSGGLDSAVTS). Positions 195, 206, 209, and 212 each coordinate Zn(2+).

It belongs to the QueC family. Zn(2+) serves as cofactor.

The catalysed reaction is 7-carboxy-7-deazaguanine + NH4(+) + ATP = 7-cyano-7-deazaguanine + ADP + phosphate + H2O + H(+). It functions in the pathway purine metabolism; 7-cyano-7-deazaguanine biosynthesis. Functionally, catalyzes the ATP-dependent conversion of 7-carboxy-7-deazaguanine (CDG) to 7-cyano-7-deazaguanine (preQ(0)). This Methanococcus maripaludis (strain DSM 14266 / JCM 13030 / NBRC 101832 / S2 / LL) protein is 7-cyano-7-deazaguanine synthase.